The following is a 232-amino-acid chain: Membrane steroid-binding protein 1 (232 aa).

A helical transmembrane segment spans residues 25 to 45; it reads AAFFTAVAAAAALYHVVSGIF. 2 disordered regions span residues 48 to 77 and 172 to 232; these read PPPPPPPRPRDEPEAEPLPPPVQLGEVSEE and TVPV…AKES. In terms of domain architecture, Cytochrome b5 heme-binding spans 71–170; sequence LGEVSEEELR…GKYVKVGTVK (100 aa). Residues 73–170 form a steroid-binding region; that stretch reads EVSEEELRQY…GKYVKVGTVK (98 aa). The span at 179–193 shows a compositional bias: low complexity; it reads APSTSPETTETAAAA. Residues 194 to 219 are compositionally biased toward basic and acidic residues; the sequence is EPEKAPATEEKPREVSSEEVKEKEDA.

Belongs to the cytochrome b5 family. MAPR subfamily. Interacts with SERL2. Expressed in leaf sheaths, leaf blades and panicles.

It localises to the cell membrane. Binds multiple steroid compounds. May act as a coreceptor with SERL2 and enhance its endocytosis. The sequence is that of Membrane steroid-binding protein 1 from Oryza sativa subsp. japonica (Rice).